The primary structure comprises 152 residues: Transcriptional regulator MraZ (152 aa).

2 SpoVT-AbrB domains span residues 5 to 52 (ASAI…PIQE) and 81 to 124 (AHEC…DEAA).

Belongs to the MraZ family. In terms of assembly, forms oligomers.

Its subcellular location is the cytoplasm. The protein resides in the nucleoid. This chain is Transcriptional regulator MraZ, found in Shewanella halifaxensis (strain HAW-EB4).